Consider the following 382-residue polypeptide: Mannitol-1-phosphate 5-dehydrogenase (382 aa).

3–14 provides a ligand contact to NAD(+); the sequence is ALHFGAGNIGRG. At Lys269 the chain carries N6-acetyllysine.

It belongs to the mannitol dehydrogenase family.

It carries out the reaction D-mannitol 1-phosphate + NAD(+) = beta-D-fructose 6-phosphate + NADH + H(+). The sequence is that of Mannitol-1-phosphate 5-dehydrogenase from Escherichia coli O9:H4 (strain HS).